The chain runs to 157 residues: UPF0758 protein VC_0510 (157 aa).

One can recognise an MPN domain in the interval 36–157 (ALTNPDATKE…CTSFAERGWL (122 aa)). Residues H107, H109, and D120 each coordinate Zn(2+). Residues 107–120 (HNHPSGDSTPSQAD) carry the JAMM motif motif.

It belongs to the UPF0758 family.

The chain is UPF0758 protein VC_0510 from Vibrio cholerae serotype O1 (strain ATCC 39315 / El Tor Inaba N16961).